Reading from the N-terminus, the 665-residue chain is Methionine--tRNA ligase (665 aa).

Residues 12–22 (YYPSGKLHIGS) carry the 'HIGH' region motif. The short motif at 308-312 (KMSKS) is the 'KMSKS' region element. Lys311 contacts ATP. One can recognise a tRNA-binding domain in the interval 562-665 (TFDAVEIRVA…PSVPNGSIIG (104 aa)).

Belongs to the class-I aminoacyl-tRNA synthetase family. MetG type 2B subfamily. In terms of assembly, homodimer.

The protein localises to the cytoplasm. It carries out the reaction tRNA(Met) + L-methionine + ATP = L-methionyl-tRNA(Met) + AMP + diphosphate. Is required not only for elongation of protein synthesis but also for the initiation of all mRNA translation through initiator tRNA(fMet) aminoacylation. The protein is Methionine--tRNA ligase (metG) of Streptococcus pyogenes serotype M6 (strain ATCC BAA-946 / MGAS10394).